A 655-amino-acid chain; its full sequence is MRPPGPRAPGLALLAALLAAPRALAEAPHLVLVDAARALRPLRPFWRSTGFCPPLPHSQADRYDLSWDQQLNLAYVGAVPHGGIEQVRTHWLLELITARESAGQGLSYNFTHLDGYLDLLRENQLLPGFELMGSPSQRFTDFEDKRQVLAWKELVSLLARRYIGRYGLSYVSKWNFETWNEPDHHDFDNVTMTLQGFLNYYDACSEGLRAASPALRFGGPGDSFHPWPRSPLCWGLLEHCHNGTNFFTGELGVRLDYISLHKKGAGSSIYILEQEQATVQQIRRLFPKFADTPVYNDEADPLVGWALPQPWRADVTYAAMVVKVVAQHQNPPRANGSAALRPALLSNDNAFLSFHPHPFTQRTLTARFQVNDTEPPHVQLLRKPVLTAMALLALLDGRQLWAEVSRGGTVLDSNHTVGVLASAHLPAGPRDAWRATVLLYASDDTRAHAARAVPVTLRLLGVPRGPGLVYVTLALDNPRCSPHGEWQRLGRPVFPTAEEFRRMRAAEDPVAEAPRPFPASGRLTLSVELRLPSLLLLHVCARPEKPPGPVTRLRALPLTRGQVLLVWSDERVGSKCLWTYEIQFSADGEVYTPISRKPSTFNLFVFSPESAVTSGSYRVRAVDYWARPGPFSTRVHYVEVPAPSGPPRPSDCERC.

The N-terminal stretch at Met-1–Ala-25 is a signal peptide. Positions 53, 55, and 57 each coordinate alpha-D-mannopyranose. Residue His-90 coordinates alpha-L-iduronate. Asn-109 is a glycosylation site (N-linked (GlcNAc...) asparagine). 2 residues coordinate alpha-L-iduronate: Asn-180 and Glu-181. Glu-181 acts as the Proton donor in catalysis. 2 N-linked (GlcNAc...) asparagine glycosylation sites follow: Asn-189 and Asn-242. The alpha-L-iduronate site is built by Lys-263, Glu-298, and Gly-304. Catalysis depends on Glu-298, which acts as the Nucleophile. An alpha-D-mannopyranose-binding site is contributed by Trp-305. N-linked (GlcNAc...) asparagine glycosylation occurs at Asn-335. Residues Asp-348 and Arg-362 each coordinate alpha-L-iduronate. Residues Asn-371 and Asn-414 are each glycosylated (N-linked (GlcNAc...) asparagine). Cys-540 and Cys-576 are oxidised to a cystine.

This sequence belongs to the glycosyl hydrolase 39 family. Monomer. A smaller 63 kDa protein probably arises from IDUA protein by proteolytic cleavage. Post-translationally, N-glycosylation contributes to substrate binding and is required for full enzymatic activity. Detected in testis (at protein level). Expressed ubiquitously.

The protein localises to the lysosome. It catalyses the reaction Hydrolysis of unsulfated alpha-L-iduronosidic linkages in dermatan sulfate.. The chain is Alpha-L-iduronidase (IDUA) from Canis lupus familiaris (Dog).